Here is a 384-residue protein sequence, read N- to C-terminus: Protein RecA (384 aa).

An ATP-binding site is contributed by 76 to 83 (GPESSGKT). A disordered region spans residues 346 to 365 (QGSAEPEKAAKPEKVEKADK). Basic and acidic residues predominate over residues 350–365 (EPEKAAKPEKVEKADK).

It belongs to the RecA family.

It is found in the cytoplasm. Can catalyze the hydrolysis of ATP in the presence of single-stranded DNA, the ATP-dependent uptake of single-stranded DNA by duplex DNA, and the ATP-dependent hybridization of homologous single-stranded DNAs. It interacts with LexA causing its activation and leading to its autocatalytic cleavage. This is Protein RecA from Polaromonas naphthalenivorans (strain CJ2).